A 130-amino-acid chain; its full sequence is Large ribosomal subunit protein bL20 (130 aa).

The protein belongs to the bacterial ribosomal protein bL20 family.

Its function is as follows. Binds directly to 23S ribosomal RNA and is necessary for the in vitro assembly process of the 50S ribosomal subunit. It is not involved in the protein synthesizing functions of that subunit. In Leifsonia xyli subsp. xyli (strain CTCB07), this protein is Large ribosomal subunit protein bL20.